The following is a 33-amino-acid chain: MSDIN-like toxin proprotein 5 (33 aa).

Positions 1-10 (MSDINATRLP) are excised as a propeptide. The cyclopeptide (Ile-Pro) cross-link spans 11–18 (IFWFIYFP). The propeptide occupies 19 to 32 (CVGDNVDNTLTRGE).

It belongs to the MSDIN fungal toxin family. Processed by the macrocyclase-peptidase enzyme POPB to yield a toxic cyclic octapeptide. POPB first removes 10 residues from the N-terminus. Conformational trapping of the remaining peptide forces the enzyme to release this intermediate rather than proceed to macrocyclization. The enzyme rebinds the remaining peptide in a different conformation and catalyzes macrocyclization of the N-terminal 8 residues.

Its function is as follows. Probable toxin that belongs to the MSDIN-like toxin family responsible for a large number of food poisoning cases and deaths. This chain is MSDIN-like toxin proprotein 5, found in Amanita phalloides (Death cap).